Consider the following 334-residue polypeptide: Methionyl-tRNA formyltransferase (334 aa).

Residue 111-114 (SILP) participates in (6S)-5,6,7,8-tetrahydrofolate binding.

This sequence belongs to the Fmt family.

The enzyme catalyses L-methionyl-tRNA(fMet) + (6R)-10-formyltetrahydrofolate = N-formyl-L-methionyl-tRNA(fMet) + (6S)-5,6,7,8-tetrahydrofolate + H(+). Its function is as follows. Attaches a formyl group to the free amino group of methionyl-tRNA(fMet). The formyl group appears to play a dual role in the initiator identity of N-formylmethionyl-tRNA by promoting its recognition by IF2 and preventing the misappropriation of this tRNA by the elongation apparatus. This is Methionyl-tRNA formyltransferase from Trichormus variabilis (strain ATCC 29413 / PCC 7937) (Anabaena variabilis).